The following is a 739-amino-acid chain: POU domain, class 2, transcription factor 1 (739 aa).

Polar residues predominate over residues 1 to 11; sequence MNNPSETSKPS. Disordered stretches follow at residues 1–39, 67–95, 253–277, 353–378, and 489–553; these read MNNP…GGPI, SLNV…SVQA, TPIQ…EEPS, DSTL…RRKK, and SVTG…SSPL. The span at 81–95 shows a compositional bias: low complexity; sequence SQQPSQPSQQPSVQA. One can recognise a POU-specific domain in the interval 274-348; that stretch reads EEPSDLEELE…LLEKWLNDAE (75 aa). Residues 353 to 364 show a composition bias toward low complexity; it reads DSTLSSPSALNS. A DNA-binding region (homeobox) is located at residues 375-434; sequence RRKKRTSIETNIRVALEKSFLENQKPTSEEITMIADQLNMEKEVIRVWFCNRRQKEKRIN. Over residues 489–552 the composition is skewed to low complexity; it reads SVTGTTETTS…QTTSTPLSSP (64 aa).

It belongs to the POU transcription factor family. Class-2 subfamily. As to quaternary structure, interacts with NR3C1, AR and PGR.

It localises to the nucleus. Functionally, transcription factor that binds to the octamer motif (5'-ATTTGCAT-3') and activates the promoters of the genes for some small nuclear RNAs (snRNA) and of genes such as those for histone H2B and immunoglobulins. Modulates transcription transactivation by NR3C1, AR and PGR. This Gallus gallus (Chicken) protein is POU domain, class 2, transcription factor 1 (POU2F1).